The chain runs to 354 residues: Uroporphyrinogen decarboxylase (354 aa).

Substrate-binding positions include 25-29, Phe-44, Asp-75, Tyr-152, Thr-207, and His-330; that span reads RQAGR.

It belongs to the uroporphyrinogen decarboxylase family. In terms of assembly, homodimer.

It localises to the cytoplasm. It carries out the reaction uroporphyrinogen III + 4 H(+) = coproporphyrinogen III + 4 CO2. The protein operates within porphyrin-containing compound metabolism; protoporphyrin-IX biosynthesis; coproporphyrinogen-III from 5-aminolevulinate: step 4/4. Its function is as follows. Catalyzes the decarboxylation of four acetate groups of uroporphyrinogen-III to yield coproporphyrinogen-III. The chain is Uroporphyrinogen decarboxylase from Xanthomonas axonopodis pv. citri (strain 306).